The chain runs to 988 residues: MGSVKRKSVEESSDSAPPQKVQREDDSTQIINEELVGCVHDVSFPENYVPLAPSVHNKPPAKDFPFTLDSFQSEAIKCLDNGESVMVSAHTSAGKTVVASYAIAMSLKENQRVIYTSPIKALSNQKYRDFKEEFSDVGLMTGDVTIDPNASCLVMTTEILRSMQYKGSEIMREVAWIIFDEVHYMRDSERGVVWEESIVMAPKNSRFVFLSATVPNAKEFADWVAKVHQQPCHIVYTDYRPTPLQHYVFPAGGNGLYLVVDEKSKFHEDSFQKSLNALVPTNESDKKRDNGKFQKGLVIGKLGEESDIFKLVKMIIQRQYDPVILFSFSKKECEALAMQMSKMVLNSDDEKDAVETIFASAIDMLSDDDKKLPQVSNILPILKRGIGVHHSGLLPILKEVIEILFQEGLIKCLFATETFSIGLNMPAKTVVFTNVRKFDGDKFRWLSSGEYIQMSGRAGRRGIDKRGICILMVDEKMEPAVAKSMLKGSADSLNSAFHLSYNMLLNQLRCEEGDPENLLRNSFFQFQADRAIPDLEKQIKSLEEERDSLVIEEEESLKNYYNLILQYKSLKKDIREIVFTPKYCLPFLLPNRAVCLDCTNDDEEPQSFSIEDQDTWGVIMKFNKVKSLSEDDDSRRPEDANYTVDVLTRCMVSKDGVGKKKVKAVPIKERGEPVVVTVPLSQIKSLSSAIMNIPKDLVPLEARENALKKVSELLSRHPDGIPLDPEVDMKIKSSSYKKTVRRLEALENLFEKHKIAKSPLITEKLKVLQMKEELIAKIKSLKKTVRSSTALAFKDELKARKRVLRRLGYITSDNVVELKGKVACEISSAEELTLTELMFSGIFKDAKVEELVSLLSCFVWRERLPDAAKPREELDLLFIQLQDTARRVAEVQLDCKVEIDVESFVQSFRPDIMEAVYAWAKGSKFYEVMEIARVFEGSLIRAIRRMEEVLQQLIVAAKSIGETQLEAKLEEAVSKIKRDIVFAASLYL.

The disordered stretch occupies residues 1–27 (MGSVKRKSVEESSDSAPPQKVQREDDS). The Helicase ATP-binding domain occupies 76–232 (IKCLDNGESV…WVAKVHQQPC (157 aa)). 89-96 (AHTSAGKT) provides a ligand contact to ATP. Positions 180–183 (DEVH) match the DEVH box motif. Residues 307–509 (DIFKLVKMII…SYNMLLNQLR (203 aa)) enclose the Helicase C-terminal domain.

Belongs to the DExH box helicase family. SKI2 subfamily. In terms of tissue distribution, ubiquitous but preferentially expressed in active tissues.

It localises to the nucleus. The protein resides in the nucleolus. It catalyses the reaction ATP + H2O = ADP + phosphate + H(+). Functionally, ATP-dependent RNA helicase that associates with the RNA exosome complex. Required for proper rRNA biogenesis and development. Involved in the 3'-processing of the 7S pre-RNA to the mature 5.8S rRNA and also in the removal of rRNA maturation by-products. The protein is DExH-box ATP-dependent RNA helicase DExH9 of Arabidopsis thaliana (Mouse-ear cress).